We begin with the raw amino-acid sequence, 312 residues long: Olfactory receptor 2T10 (312 aa).

The Extracellular segment spans residues 1–25; the sequence is MRLANQTLGGDFFLLGIFSQISHPG. An N-linked (GlcNAc...) asparagine glycan is attached at N5. A helical transmembrane segment spans residues 26-49; the sequence is RLCLLIFSIFLMAVSWNITLILLI. Topologically, residues 50–57 are cytoplasmic; sequence HIDSSLHT. The helical transmembrane segment at 58 to 79 threads the bilayer; that stretch reads PMYFFINQLSLIDLTYISVTVP. At 80–100 the chain is on the extracellular side; that stretch reads KMLVNQLAKDKTISVLGCGTQ. The cysteines at positions 97 and 189 are disulfide-linked. A helical transmembrane segment spans residues 101 to 120; it reads MYFYLQLGGAECCLLAAMAY. The Cytoplasmic portion of the chain corresponds to 121 to 139; it reads DRYVAICHPLRYSVLMSHR. Residues 140-158 form a helical membrane-spanning segment; it reads VCLLLASGCWFVGSVDGFM. At 159-195 the chain is on the extracellular side; the sequence is LTPIAMSFPFCRSHEIQHFFCEVPAVLKLSCSDTSLY. The helical transmembrane segment at 196-219 threads the bilayer; the sequence is KIFMYLCCVIMLLIPVTVISVSYY. Over 220–236 the chain is Cytoplasmic; sequence YIILTIHKMNSVEGRKK. The helical transmembrane segment at 237-259 threads the bilayer; sequence AFTTCSSHITVVSLFYGAAIYNY. At 260-272 the chain is on the extracellular side; the sequence is MLPSSYQTPEKDM. A helical membrane pass occupies residues 273–292; it reads MSSFFYTILTPVLNPIIYSF. Topologically, residues 293-312 are cytoplasmic; the sequence is RNKDVTRALKKMLSVQKPPY.

It belongs to the G-protein coupled receptor 1 family.

It is found in the cell membrane. Odorant receptor. This is Olfactory receptor 2T10 (OR2T10) from Homo sapiens (Human).